We begin with the raw amino-acid sequence, 679 residues long: F-box/LRR-repeat protein 5 (679 aa).

Residues 1–159 (MAPFPDEVDV…IKQQVMLQHC (159 aa)) are hemerythrin-like. 7 residues coordinate Fe(3+): His15, His57, Glu58, Glu61, His80, His126, and Glu130. The F-box domain occupies 205 to 251 (RVSVSSLPQELLLRIFRFLGPQDLCRCAQVCSVWTQVTRTGSLWRHL). LRR repeat units lie at residues 316-342 (EKLL…SLAY), 343-367 (SSTL…LDLT), 368-395 (QTDV…DLSG), 396-426 (CDKI…LLQA), 565-595 (CWFE…SLSG), 596-623 (CHQI…NLSG), and 624-649 (CPLI…HFYY). [2Fe-2S] cluster is bound by residues Cys650, Cys664, Cys674, and Cys675.

As to quaternary structure, part of a SCF (SKP1-cullin-F-box) protein ligase complex. [2Fe-2S] cluster serves as cofactor. Ubiquitinated upon iron and oxygen depletion, leading to its degradation by the proteasome. Ubiquitination is regulated by the hemerythrin-like region that acts as an oxygen and iron sensor.

It localises to the cytoplasm. The protein resides in the perinuclear region. The protein localises to the nucleus. It participates in protein modification; protein ubiquitination. Functionally, component of some SCF (SKP1-cullin-F-box) protein ligase complex that plays a central role in iron homeostasis by promoting the ubiquitination and subsequent degradation of ireb2/irp2. Upon high iron and oxygen level, it specifically recognizes and binds ireb2/irp2, promoting its ubiquitination and degradation by the proteasome. The chain is F-box/LRR-repeat protein 5 (fbxl5) from Danio rerio (Zebrafish).